Reading from the N-terminus, the 270-residue chain is Phosphatidylglycerol--prolipoprotein diacylglyceryl transferase (270 aa).

4 helical membrane passes run 19–39, 56–76, 92–112, and 116–136; these read FPVY…LWLA, LVLI…VIFE, QGGL…VLFA, and GLSF…GQAI. Arginine 138 lines the a 1,2-diacyl-sn-glycero-3-phospho-(1'-sn-glycerol) pocket. A run of 3 helical transmembrane segments spans residues 178–198, 206–226, and 236–256; these read HPTF…LLAL, GELF…VEGL, and LRIA…FIIV.

The protein belongs to the Lgt family.

The protein resides in the cell membrane. The enzyme catalyses L-cysteinyl-[prolipoprotein] + a 1,2-diacyl-sn-glycero-3-phospho-(1'-sn-glycerol) = an S-1,2-diacyl-sn-glyceryl-L-cysteinyl-[prolipoprotein] + sn-glycerol 1-phosphate + H(+). It functions in the pathway protein modification; lipoprotein biosynthesis (diacylglyceryl transfer). Its function is as follows. Catalyzes the transfer of the diacylglyceryl group from phosphatidylglycerol to the sulfhydryl group of the N-terminal cysteine of a prolipoprotein, the first step in the formation of mature lipoproteins. The chain is Phosphatidylglycerol--prolipoprotein diacylglyceryl transferase from Bacillus cereus (strain ATCC 14579 / DSM 31 / CCUG 7414 / JCM 2152 / NBRC 15305 / NCIMB 9373 / NCTC 2599 / NRRL B-3711).